The sequence spans 523 residues: Occludin (523 aa).

A disordered region spans residues 1–20 (MSVRPFESPPPYRPDEFKPN). Over 1–66 (MSVRPFESPP…KWTSPPGVIR (66 aa)) the chain is Cytoplasmic. The region spanning 60–269 (SPPGVIRILS…IIVFAVKTRR (210 aa)) is the MARVEL domain. Residues 67 to 87 (ILSMLVIVMCIAVFACVASTL) traverse the membrane as a helical segment. The Extracellular segment spans residues 88–140 (AWDRAYGTGIFGGSMNYPYGSGFGSYGGGFGGYGYGYGYGYGGYTDPRAAKGF). Residues 141–161 (LLAMAAFCFIASLVIFVTSVI) form a helical membrane-spanning segment. Residues 162–173 (RSGMSRTRRYYL) are Cytoplasmic-facing. A helical membrane pass occupies residues 174-194 (IVIIVSAILGIMVFIATIVYI). Residues 195–244 (MGVNPTAQASGSMYGSQIYTICSQFYTPGGTGLYVDQYLYHYCVVDPQEA) are Extracellular-facing. An intrachain disulfide couples Cys-216 to Cys-237. Residues 245–265 (IAIVLGFMIIVAFALIIVFAV) traverse the membrane as a helical segment. The Cytoplasmic segment spans residues 266–523 (KTRRKMDRYD…MVGDYDRRKT (258 aa)). Ser-302 is subject to Phosphoserine. The segment at 302–338 (SAGTQDMPPPPSDYAERVDSPMAYSSNGKVNGKRSYP) is disordered. Thr-305 is modified (phosphothreonine). Residues Ser-313, Ser-321, Ser-340, and Ser-360 each carry the phosphoserine modification. The segment at 363 to 408 (DFRQPRYSSNDNLETPSKRTPTKGKAGKAKRTDPDHYETDYTTGGE) is disordered. The segment covering 368–381 (RYSSNDNLETPSKR) has biased composition (polar residues). Tyr-369 is subject to Phosphotyrosine. Residues Ser-370 and Ser-371 each carry the phosphoserine modification. Residues 382–391 (TPTKGKAGKA) show a composition bias toward basic residues. Residues 392–401 (KRTDPDHYET) show a composition bias toward basic and acidic residues. Phosphotyrosine occurs at positions 399 and 403. Phosphothreonine; by PKC/PRKCH is present on residues Thr-404 and Thr-405. Ser-409 is modified (phosphoserine). The 109-residue stretch at 415-523 (EDWLREYPPI…MVGDYDRRKT (109 aa)) folds into the OCEL domain. The stretch at 433 to 489 (YKRNFDAGLQEYKSLLAELDEVNKELSRLDRELDDYREESEEYMAAADEYNRLKQVK) forms a coiled coil. At Ser-491 the chain carries Phosphoserine.

This sequence belongs to the ELL/occludin family. Interacts with TJP1/ZO1. Interacts with VAPA. Interacts with CLDN1, CLDN6, CLDN9, CLDN11, CLDN12 and CLDN17. Interacts with PLSCR1. Interacts with LSR, ILDR1 and ILDR2. Interacts with TJP2/ZO2. Post-translationally, dephosphorylated by PTPRJ.

The protein resides in the cell membrane. The protein localises to the cell junction. It is found in the tight junction. Its function is as follows. May play a role in the formation and regulation of the tight junction (TJ) paracellular permeability barrier. May be involved in the organization of actin in endothelial cells. In Rattus norvegicus (Rat), this protein is Occludin (Ocln).